A 65-amino-acid polypeptide reads, in one-letter code: Large ribosomal subunit protein uL29 (65 aa).

Positions 30–49 are disordered; that stretch reads ERSSVAMGGAPSSPGKMRSI.

Belongs to the universal ribosomal protein uL29 family.

This is Large ribosomal subunit protein uL29 from Picrophilus torridus (strain ATCC 700027 / DSM 9790 / JCM 10055 / NBRC 100828 / KAW 2/3).